A 144-amino-acid polypeptide reads, in one-letter code: Large ribosomal subunit protein uL15 (144 aa).

A disordered region spans residues 1–52; that stretch reads MKLHTLKSTPGARVEKHRVGRGHAAGKGKQAGKGQSGQNKRHGHRLGFEGGQ. A compositionally biased stretch (basic residues) spans 15–26; the sequence is EKHRVGRGHAAG.

The protein belongs to the universal ribosomal protein uL15 family. Part of the 50S ribosomal subunit.

Functionally, binds to the 23S rRNA. The chain is Large ribosomal subunit protein uL15 from Mycoplasmopsis agalactiae (strain NCTC 10123 / CIP 59.7 / PG2) (Mycoplasma agalactiae).